A 268-amino-acid polypeptide reads, in one-letter code: Esterase GME11355 (268 aa).

Catalysis depends on charge relay system residues serine 122, aspartate 212, and histidine 240.

The protein belongs to the LovG family.

It functions in the pathway secondary metabolite biosynthesis. Esterase; part of the gene cluster that mediates the biosynthesis of dibenzodioxocinones such as pestalotiollide B, a novel class of inhibitors against cholesterol ester transfer protein (CEPT). The biosynthesis initiates from condensation of acetate and malonate units catalyzed by the non-reducing PKS pks8/GME11356. Pks8/GME11356 lacks a thioesterase (TE) domain, which is important to the cyclizing of the third ring of atrochrysone carboxylic acid, and the esterase GME11355 might play the role of TE and catalyzes the cyclization reaction of the C ring. The lactamase-like protein GME11357 (or other beta-lactamases in Pestalotiopsis microspora) probably hydrolyzes the thioester bond between the ACP of pks8/GME11356 and the intermediate to release atrochrysone carboxylic acid, which is spontaneously dehydrates to form endocrocin anthrone. Endocrocin anthrone is further converted to emodin via the endocrocin intermediate. Emodin is then oxidized by several enzymes such as the Baeyer-Villiger oxidase GME11358, the oxidoreductase GME11367, the short chain dehydrogenase/reductase GME11373, as well as by other oxidoreductases from the cluster, to modify the A and C rings and open the B ring, and finally yield monodictyphenone. The prenyltransferase GME11375 may catalyze the addition reaction between the C5 side chains and the carbon bone of dibenzodioxocinones. The remaining biochemical reactions to the final product dibenzodioxocinones should be methylation catalyzed by methyltransferase GME11366 and reduction and lactonization reaction catalyzed by a series of oxidordeuctases. This chain is Esterase GME11355, found in Pestalotiopsis microspora.